Consider the following 593-residue polypeptide: Aspartate--tRNA ligase (593 aa).

Glutamate 180 is a binding site for L-aspartate. Residues 204–207 form an aspartate region; sequence QIFK. An L-aspartate-binding site is contributed by arginine 226. Residues 226-228 and glutamine 235 contribute to the ATP site; that span reads RDE. Histidine 453 contacts L-aspartate. Glutamate 487 contacts ATP. Arginine 494 lines the L-aspartate pocket. 539 to 542 is an ATP binding site; that stretch reads GLDR.

It belongs to the class-II aminoacyl-tRNA synthetase family. Type 1 subfamily. As to quaternary structure, homodimer.

The protein resides in the cytoplasm. It catalyses the reaction tRNA(Asp) + L-aspartate + ATP = L-aspartyl-tRNA(Asp) + AMP + diphosphate. Functionally, catalyzes the attachment of L-aspartate to tRNA(Asp) in a two-step reaction: L-aspartate is first activated by ATP to form Asp-AMP and then transferred to the acceptor end of tRNA(Asp). The protein is Aspartate--tRNA ligase of Clostridium botulinum (strain Kyoto / Type A2).